The sequence spans 198 residues: MAEKQTAKRNRREEILQSLALMLESSDGSQRITTAKLAASVGVSEAALYRHFPSKTRMFDSLIEFIEDSLITRINLILKDEKDTTARLRLIVLLILGFGERNPGLTRILTGHALMFEQDRLQGRINQLFERIEAQLRQVMREKKMREGEGYTLDETLLASQLLAFCEGMLSRFVRSEFKYRPTDDFDARWPLVAAQLQ.

An HTH tetR-type domain is found at 10 to 70 (NRREEILQSL…SLIEFIEDSL (61 aa)). A DNA-binding region (H-T-H motif) is located at residues 33–52 (TTAKLAASVGVSEAALYRHF). The stretch at 117-145 (EQDRLQGRINQLFERIEAQLRQVMREKKM) forms a coiled coil.

The protein belongs to the nucleoid occlusion factor SlmA family. Homodimer. Interacts with FtsZ.

The protein resides in the cytoplasm. Its subcellular location is the nucleoid. Required for nucleoid occlusion (NO) phenomenon, which prevents Z-ring formation and cell division over the nucleoid. Acts as a DNA-associated cell division inhibitor that binds simultaneously chromosomal DNA and FtsZ, and disrupts the assembly of FtsZ polymers. SlmA-DNA-binding sequences (SBS) are dispersed on non-Ter regions of the chromosome, preventing FtsZ polymerization at these regions. The protein is Nucleoid occlusion factor SlmA of Klebsiella pneumoniae subsp. pneumoniae (strain ATCC 700721 / MGH 78578).